Consider the following 914-residue polypeptide: Alanine--tRNA ligase (914 aa).

4 residues coordinate Zn(2+): H613, H617, C717, and H721.

Belongs to the class-II aminoacyl-tRNA synthetase family. It depends on Zn(2+) as a cofactor.

The protein resides in the cytoplasm. The enzyme catalyses tRNA(Ala) + L-alanine + ATP = L-alanyl-tRNA(Ala) + AMP + diphosphate. Its function is as follows. Catalyzes the attachment of alanine to tRNA(Ala) in a two-step reaction: alanine is first activated by ATP to form Ala-AMP and then transferred to the acceptor end of tRNA(Ala). Also edits incorrectly charged Ser-tRNA(Ala) and Gly-tRNA(Ala) via its editing domain. This is Alanine--tRNA ligase from Pyrococcus abyssi (strain GE5 / Orsay).